The sequence spans 712 residues: 3',5'-cyclic-AMP phosphodiesterase 4C (712 aa).

Disordered stretches follow at residues Met1–His31 and Arg45–Arg64. Positions Ser17 to His31 are enriched in basic residues. Positions Ser48–Arg64 are enriched in basic and acidic residues. Phosphoserine is present on Ser73. Residues Ala181–Asp200 form a disordered region. A PDEase domain is found at Val312–Ser641. The active-site Proton donor is His388. His388 provides a ligand contact to 3',5'-cyclic AMP. AMP is bound by residues His388 and His392. His392, His428, Asp429, and Asp546 together coordinate Zn(2+). Positions 429, 546, 597, and 600 each coordinate AMP. Residue Asp429 participates in Mg(2+) binding. Residue Asp429 coordinates Mn(2+). The 3',5'-cyclic AMP site is built by Gln597 and Phe600. Disordered regions lie at residues Ser636–Arg655 and Glu664–Thr712. Position 641 is a phosphoserine (Ser641). The segment covering Glu664–Glu678 has biased composition (acidic residues).

The protein belongs to the cyclic nucleotide phosphodiesterase family. PDE4 subfamily. Part of a complex containing AKAP5, ADCY5, ADCY6 and PKD2. Zn(2+) is required as a cofactor. It depends on Mg(2+) as a cofactor. Mn(2+) serves as cofactor. In terms of tissue distribution, expressed in various tissues but not in cells of the immune system.

It localises to the cell projection. The protein localises to the cilium. The enzyme catalyses 3',5'-cyclic AMP + H2O = AMP + H(+). It functions in the pathway purine metabolism; 3',5'-cyclic AMP degradation; AMP from 3',5'-cyclic AMP: step 1/1. With respect to regulation, inhibited by rolipram. Its function is as follows. Hydrolyzes the second messenger cAMP, which is a key regulator of many important physiological processes. This Homo sapiens (Human) protein is 3',5'-cyclic-AMP phosphodiesterase 4C.